A 274-amino-acid chain; its full sequence is MPCRREEEEEAGDEAEGEEDDDSFLLLQQSVTLGGSTDVDQLIVQIGETLQLDAAHDRPASPCAAPGPPPPQVLAALPADKTGTPARRLLRPTGSAETGNPAPPGAVRCVLGERGRVRGRSAPYCVAEISPGASALPQQPGLDGPPGTGKLSTPQPLSGPCRRGWLRNAAASRRLQQRRGSQPETRTGDDDDPHRLLQQLVLSGNLIKEAVRRLHSRQLQLHAKLPAHPFLGPLSAPVHEPPSPGSPRAACSDPGAFMGRAQLRTGDDLLVPGS.

Disordered stretches follow at residues 1–24 (MPCR…DDSF), 55–107 (AHDR…PGAV), 132–194 (GASA…DDPH), and 232–274 (GPLS…VPGS). Over residues 7–23 (EEEEAGDEAEGEEDDDS) the composition is skewed to acidic residues. The tract at residues 191-214 (DDPHRLLQQLVLSGNLIKEAVRRL) is involved in GSK-3 binding. Residues S243 and S246 each carry the phosphoserine modification.

The protein belongs to the GSK-3-binding protein family. Binds DVL1. Binds GSK-3 and prevent GSK-3-dependent phosphorylation. Phosphorylated. Highly expressed in testis. Lower level of expression in spleen, thymus and brain.

It is found in the cytoplasm. Positively regulates the Wnt signaling pathway by stabilizing beta-catenin through the association with GSK-3. May play a role in tumor progression and collaborate with PIM1 and MYC in lymphomagenesis. In Mus musculus (Mouse), this protein is Proto-oncogene FRAT1 (Frat1).